A 505-amino-acid polypeptide reads, in one-letter code: MDTIDQTPHRSYEVRTYGCQMNVHDSERLSGLLEDAGYTKAAAGQAPDLVVFNTCAVRENADNKLYGNLSHLAPAKERNPDMQIAVGGCLAQKDRDVVVKKAPWVDVVFGTHNIGSLPALLDRARHNQRAEVEILEALEAFPSTLPAKRESAYAGWVSISVGCNNTCTFCIVPALRGKEVDRRPGDILAEVQALVNEGVVEVTLLGQNVNAYGVSFADPDQPRDRGAFAALLRACGQIDGLERVRFTSPHPAEFTDDVIEAMAETPNVCPQLHMPLQSGSDRVLKAMRRSYRKSRFLGIIDKVRTAMPHAAITTDIIVGFPGETEEDFQDTLDVVRQARFTSAYTFQYSKRPGTPAAEMDEQLPKAVVQERYERLIALQEQITLEENQKLVGAEVELLVAAGEGRKNAETARMSGRARDGRLVHFRPEGNLDGTVRPGDVVTVVVSAAAPHHLVADTPVLTHRRTRAGDSFEKGVTPKTPPIGVGLGLPQIGAPAPLPVQMGCNA.

Positions 10–126 (RSYEVRTYGC…LPALLDRARH (117 aa)) constitute an MTTase N-terminal domain. The [4Fe-4S] cluster site is built by cysteine 19, cysteine 55, cysteine 89, cysteine 163, cysteine 167, and cysteine 170. One can recognise a Radical SAM core domain in the interval 149-385 (RESAYAGWVS…IALQEQITLE (237 aa)). Residues 388 to 459 (QKLVGAEVEL…PHHLVADTPV (72 aa)) form the TRAM domain.

This sequence belongs to the methylthiotransferase family. MiaB subfamily. Monomer. [4Fe-4S] cluster is required as a cofactor.

The protein localises to the cytoplasm. The enzyme catalyses N(6)-dimethylallyladenosine(37) in tRNA + (sulfur carrier)-SH + AH2 + 2 S-adenosyl-L-methionine = 2-methylsulfanyl-N(6)-dimethylallyladenosine(37) in tRNA + (sulfur carrier)-H + 5'-deoxyadenosine + L-methionine + A + S-adenosyl-L-homocysteine + 2 H(+). Its function is as follows. Catalyzes the methylthiolation of N6-(dimethylallyl)adenosine (i(6)A), leading to the formation of 2-methylthio-N6-(dimethylallyl)adenosine (ms(2)i(6)A) at position 37 in tRNAs that read codons beginning with uridine. In Rhodococcus jostii (strain RHA1), this protein is tRNA-2-methylthio-N(6)-dimethylallyladenosine synthase.